A 338-amino-acid polypeptide reads, in one-letter code: Taste receptor type 2 member 39 (338 aa).

At 1 to 30 (MLGRCFPPDTKEKQQLRMTKLCDPAESELS) the chain is on the extracellular side. The chain crosses the membrane as a helical span at residues 31-51 (PFLITLILAVLLAEYLIGIIA). Over 52–74 (NGFIMAIHAAEWVQNKAVSTSGR) the chain is Cytoplasmic. A helical membrane pass occupies residues 75-95 (ILVFLSVSRIALQSLMMLEIT). At 96-116 (ISSTSLSFYSEDAVYYAFKIS) the chain is on the extracellular side. The chain crosses the membrane as a helical span at residues 117 to 137 (FIFLNFCSLWFAAWLSFFYFV). The Cytoplasmic portion of the chain corresponds to 138 to 156 (KIANFSYPLFLKLRWRITG). The helical transmembrane segment at 157-177 (LIPWLLWLSVFISFSHSMFCI) threads the bilayer. Residues 178–205 (NIXTVYCNNSFPIHSSNSTKKTYLSEIN) lie on the Extracellular side of the membrane. 2 N-linked (GlcNAc...) asparagine glycosylation sites follow: Asn-185 and Asn-194. Residues 206 to 226 (VVGLAFFFNLGIVTPLIMFIL) traverse the membrane as a helical segment. Residues 227–262 (TATLLILSLKRHTLHMGSNATGSNDPSMEAHMGAIK) are Cytoplasmic-facing. A helical transmembrane segment spans residues 263–283 (ATSYFLILYIFNAVALFIYLS). Residues 284 to 291 (NMFDINSL) lie on the Extracellular side of the membrane. The helical transmembrane segment at 292 to 312 (WNNLCQIIMAAYPASHSILLI) threads the bilayer. Topologically, residues 313–338 (QDNPGLRRAWKRLQLRLHLYPKEWTL) are cytoplasmic.

The protein belongs to the G-protein coupled receptor T2R family.

It localises to the membrane. Receptor that may play a role in the perception of bitterness and is gustducin-linked. May play a role in sensing the chemical composition of the gastrointestinal content. The activity of this receptor may stimulate alpha gustducin, mediate PLC-beta-2 activation and lead to the gating of TRPM5. The chain is Taste receptor type 2 member 39 (TAS2R39) from Gorilla gorilla gorilla (Western lowland gorilla).